We begin with the raw amino-acid sequence, 134 residues long: D-xylulose reductase (134 aa).

The tract at residues 31–115 (PATTTXYKXQ…XXQXDKIGRY (85 aa)) is disordered. Basic and acidic residues predominate over residues 50–59 (QTHEGTHQDV).

Belongs to the zinc-containing alcohol dehydrogenase family.

It carries out the reaction xylitol + NAD(+) = D-xylulose + NADH + H(+). Its activity is regulated as follows. Activated by calcium and inhibited by zinc. This chain is D-xylulose reductase, found in Sus scrofa (Pig).